A 396-amino-acid chain; its full sequence is 1-deoxy-D-xylulose 5-phosphate reductoisomerase (396 aa).

Residues Thr17, Gly18, Ser19, Ile20, Asn47, and Asn130 each coordinate NADPH. Lys131 serves as a coordination point for 1-deoxy-D-xylulose 5-phosphate. Glu132 serves as a coordination point for NADPH. Residue Asp156 coordinates Mn(2+). 4 residues coordinate 1-deoxy-D-xylulose 5-phosphate: Ser157, Glu158, Ser182, and His205. Mn(2+) is bound at residue Glu158. Gly211 serves as a coordination point for NADPH. 1-deoxy-D-xylulose 5-phosphate-binding residues include Ser218, Asn223, Lys224, and Glu227. Residue Glu227 coordinates Mn(2+).

The protein belongs to the DXR family. Mg(2+) is required as a cofactor. The cofactor is Mn(2+).

The catalysed reaction is 2-C-methyl-D-erythritol 4-phosphate + NADP(+) = 1-deoxy-D-xylulose 5-phosphate + NADPH + H(+). The protein operates within isoprenoid biosynthesis; isopentenyl diphosphate biosynthesis via DXP pathway; isopentenyl diphosphate from 1-deoxy-D-xylulose 5-phosphate: step 1/6. Its function is as follows. Catalyzes the NADPH-dependent rearrangement and reduction of 1-deoxy-D-xylulose-5-phosphate (DXP) to 2-C-methyl-D-erythritol 4-phosphate (MEP). This is 1-deoxy-D-xylulose 5-phosphate reductoisomerase from Rhizobium johnstonii (strain DSM 114642 / LMG 32736 / 3841) (Rhizobium leguminosarum bv. viciae).